A 446-amino-acid chain; its full sequence is MREIVSVHLQTGQCGNQVGSAFWQTISGEHGLDSSGVYGGTSDQQLDRLNVYFNEASNNKYVPRAVLVDLEPGTMDAVRSGPFGQLFRPDNFVFGQSGAGNNWAKGHYTEGAELVDQVLDVVRREAENCECLQGFQITHSLGGGTGSGMGTLLISKIREEFPDRMMATFSVVPSPKVSDTVVEPYNATLSMHQLVENSDKTFCIDNEALYDICMRTLKLSNPSYGDLNHLVSAVMSGVSTSLRFPGQLNSDLRKLAVNMVPFPRLHFFMVGFAPLTSPGAHSFRAVTVPELTQQMMDPKNMMAASDFRNGRYLTCSTIFRGKVAMKEVEDQMRTVQNKNSAYFVEWIPNNIQTACALSPPRGLKISSTFVGNSTAIQEIFRRVGEQFSAMFRRQAFLHWYTSEGMDEMEFTEAESNMNDLVSEYQQYQDASADDGEEYEEDAPMEE.

GTP contacts are provided by Gln-13, Glu-71, Ser-140, Gly-144, Thr-145, Gly-146, Asn-206, and Asn-228. Glu-71 is a binding site for Mg(2+). Residues 421–446 form a disordered region; sequence VSEYQQYQDASADDGEEYEEDAPMEE. The span at 431–446 shows a compositional bias: acidic residues; that stretch reads SADDGEEYEEDAPMEE.

Belongs to the tubulin family. Dimer of alpha and beta chains. A typical microtubule is a hollow water-filled tube with an outer diameter of 25 nm and an inner diameter of 15 nM. Alpha-beta heterodimers associate head-to-tail to form protofilaments running lengthwise along the microtubule wall with the beta-tubulin subunit facing the microtubule plus end conferring a structural polarity. Microtubules usually have 13 protofilaments but different protofilament numbers can be found in some organisms and specialized cells. Mg(2+) serves as cofactor.

Its subcellular location is the cytoplasm. The protein resides in the cytoskeleton. Tubulin is the major constituent of microtubules, a cylinder consisting of laterally associated linear protofilaments composed of alpha- and beta-tubulin heterodimers. Microtubules grow by the addition of GTP-tubulin dimers to the microtubule end, where a stabilizing cap forms. Below the cap, tubulin dimers are in GDP-bound state, owing to GTPase activity of alpha-tubulin. The polypeptide is Tubulin beta-1 chain (tub1) (Hypocrea rufa (Trichoderma viride)).